Consider the following 258-residue polypeptide: Ditrans,polycis-undecaprenyl-diphosphate synthase ((2E,6E)-farnesyl-diphosphate specific) (258 aa).

D24 is a catalytic residue. D24 lines the Mg(2+) pocket. Substrate contacts are provided by residues 25-28, W29, R37, H41, and 69-71; these read GNGR and SSE. N72 serves as the catalytic Proton acceptor. Substrate-binding positions include W73, R75, R192, and 198–200; that span reads RIS. E211 contributes to the Mg(2+) binding site.

This sequence belongs to the UPP synthase family. Homodimer. Mg(2+) serves as cofactor.

The enzyme catalyses 8 isopentenyl diphosphate + (2E,6E)-farnesyl diphosphate = di-trans,octa-cis-undecaprenyl diphosphate + 8 diphosphate. In terms of biological role, catalyzes the sequential condensation of isopentenyl diphosphate (IPP) with (2E,6E)-farnesyl diphosphate (E,E-FPP) to yield (2Z,6Z,10Z,14Z,18Z,22Z,26Z,30Z,34E,38E)-undecaprenyl diphosphate (di-trans,octa-cis-UPP). UPP is the precursor of glycosyl carrier lipid in the biosynthesis of bacterial cell wall polysaccharide components such as peptidoglycan and lipopolysaccharide. This is Ditrans,polycis-undecaprenyl-diphosphate synthase ((2E,6E)-farnesyl-diphosphate specific) from Xanthomonas oryzae pv. oryzae (strain KACC10331 / KXO85).